We begin with the raw amino-acid sequence, 178 residues long: Large ribosomal subunit protein uL6 (178 aa).

The protein belongs to the universal ribosomal protein uL6 family. Part of the 50S ribosomal subunit.

This protein binds to the 23S rRNA, and is important in its secondary structure. It is located near the subunit interface in the base of the L7/L12 stalk, and near the tRNA binding site of the peptidyltransferase center. This Enterococcus faecalis (strain ATCC 700802 / V583) protein is Large ribosomal subunit protein uL6.